Consider the following 301-residue polypeptide: DNA repair protein RecO (301 aa).

A disordered region spans residues Pro-272–Leu-301.

This sequence belongs to the RecO family.

Involved in DNA repair and RecF pathway recombination. This Synechococcus sp. (strain JA-3-3Ab) (Cyanobacteria bacterium Yellowstone A-Prime) protein is DNA repair protein RecO.